The primary structure comprises 394 residues: Na(+)/H(+) antiporter NhaA (394 aa).

11 helical membrane-spanning segments follow: residues 14–34 (AGGL…NSAL), 59–79 (LLLW…GLEV), 95–115 (VFPA…YLLF), 125–145 (GWAI…ALLG), 154–174 (VFLL…IALF), 179–199 (VSLQ…YMNW), 213–233 (LVLW…GVIV), 254–274 (GLHP…NAGV), 292–312 (IATG…WLAV), 328–348 (IFAV…IASL), and 363–383 (LGIL…LRLV).

Belongs to the NhaA Na(+)/H(+) (TC 2.A.33) antiporter family.

It is found in the cell inner membrane. It catalyses the reaction Na(+)(in) + 2 H(+)(out) = Na(+)(out) + 2 H(+)(in). Its function is as follows. Na(+)/H(+) antiporter that extrudes sodium in exchange for external protons. The chain is Na(+)/H(+) antiporter NhaA from Yersinia pseudotuberculosis serotype O:1b (strain IP 31758).